The sequence spans 116 residues: Nucleoid-associated protein PMM0020 (116 aa).

Positions 87–98 are enriched in basic and acidic residues; the sequence is ESSTTTMKERMN. Residues 87 to 116 are disordered; the sequence is ESSTTTMKERMNDLTGGLNLNLPGLDNNDS. Residues 99–116 are compositionally biased toward low complexity; it reads DLTGGLNLNLPGLDNNDS.

This sequence belongs to the YbaB/EbfC family. As to quaternary structure, homodimer.

It is found in the cytoplasm. The protein localises to the nucleoid. Its function is as follows. Binds to DNA and alters its conformation. May be involved in regulation of gene expression, nucleoid organization and DNA protection. The sequence is that of Nucleoid-associated protein PMM0020 from Prochlorococcus marinus subsp. pastoris (strain CCMP1986 / NIES-2087 / MED4).